A 451-amino-acid polypeptide reads, in one-letter code: Amino-acid acetyltransferase (451 aa).

Positions 305-451 constitute an N-acetyltransferase domain; it reads EYLREATLDD…RRSMVLMKKL (147 aa).

This sequence belongs to the acetyltransferase family. ArgA subfamily.

It is found in the cytoplasm. The catalysed reaction is L-glutamate + acetyl-CoA = N-acetyl-L-glutamate + CoA + H(+). It functions in the pathway amino-acid biosynthesis; L-arginine biosynthesis; N(2)-acetyl-L-ornithine from L-glutamate: step 1/4. The polypeptide is Amino-acid acetyltransferase (argA) (Ralstonia nicotianae (strain ATCC BAA-1114 / GMI1000) (Ralstonia solanacearum)).